The following is a 319-amino-acid chain: Tetrahydromethanopterin S-methyltransferase subunit H (319 aa).

The protein belongs to the MtrH family. The complex is composed of 8 subunits; MtrA, MtrB, MtrC, MtrD, MtrE, MtrF, MtrG and MtrH.

The catalysed reaction is 5-methyl-5,6,7,8-tetrahydromethanopterin + coenzyme M + 2 Na(+)(in) = 5,6,7,8-tetrahydromethanopterin + methyl-coenzyme M + 2 Na(+)(out). The protein operates within one-carbon metabolism; methanogenesis from CO(2); methyl-coenzyme M from 5,10-methylene-5,6,7,8-tetrahydromethanopterin: step 2/2. Its function is as follows. Part of a complex that catalyzes the formation of methyl-coenzyme M and tetrahydromethanopterin from coenzyme M and methyl-tetrahydromethanopterin. This is an energy-conserving, sodium-ion translocating step. MtrH catalyzes the transfer of the methyl group from methyl-tetrahydromethanopterin to the corrinoid prosthetic group of MtrA. This is Tetrahydromethanopterin S-methyltransferase subunit H from Methanococcus vannielii (strain ATCC 35089 / DSM 1224 / JCM 13029 / OCM 148 / SB).